Consider the following 362-residue polypeptide: MSLQSIKYTRGSLEILDQLLLPVQSKYLPVRGVEDGWKVINKMQVRGAPAIAIVGCLSLAVEIHPEEFDSKKSLRQELEGKLNYLVSARPTAVNMKMAADELLSLANDLTKDDNVDVAAMKQRFLNATEAMLKKDIADNRAIGAHGAKAILQLVAAAAGAPMAGPVRVLTHCNTGSLATAGYGTALGVVRQLSELGKLEHVYCTETRPYNQGARLTAYELVHEKFPATLVLDSMVAALLRAKNVAAVVVGADRVAANGDTANKIGTYQIAVVAKHHGVPFFVAAPLTSIDLHIPSGDHIIIEERPDREMTHVGEHRIAAPGINCWNPAFDVTPASLITGIITERGVFQPAQLKETITKLLET.

The active-site Proton donor is aspartate 252.

Belongs to the eIF-2B alpha/beta/delta subunits family. MtnA subfamily.

It is found in the cytoplasm. Its subcellular location is the nucleus. The catalysed reaction is 5-(methylsulfanyl)-alpha-D-ribose 1-phosphate = 5-(methylsulfanyl)-D-ribulose 1-phosphate. Its pathway is amino-acid biosynthesis; L-methionine biosynthesis via salvage pathway; L-methionine from S-methyl-5-thio-alpha-D-ribose 1-phosphate: step 1/6. In terms of biological role, catalyzes the interconversion of methylthioribose-1-phosphate (MTR-1-P) into methylthioribulose-1-phosphate (MTRu-1-P). The sequence is that of Methylthioribose-1-phosphate isomerase from Drosophila pseudoobscura pseudoobscura (Fruit fly).